A 363-amino-acid chain; its full sequence is MGLRKKNARNPPVLSHEFMVQNHADMVSCVGMFFVLGLMFEGTSEMSIAFLTLQHGVVVPAEGLPSGSRTLYHYGVKDLATVFFYMLVAIIIHATIQEYVLDKLSRRLQLTKGKQNKLNEAGQLSVFYIVSGIWGMIILASENCLSDPTLLWKSQPHNMMTFQMKFFYISQLAYWFHSFPELYFQKVRKQDIPGQLIYIGLHLFHIGGAYLLYLNHLGLLLLMLHYAVELLSSVCSLLYFGDERYQKGLSLWPIVFISGRLVTLIVSVVTVGLHLAGTNRNGNALSGNVNVLAAKIAVLSSSCSIQVYITWTLTTVWLQRWLEDANLHVCGRKRRSRARKGTENGVENPNRIDSPPKKKEKAP.

Over 1–29 (MGLRKKNARNPPVLSHEFMVQNHADMVSC) the chain is Cytoplasmic. Residues 30 to 50 (VGMFFVLGLMFEGTSEMSIAF) traverse the membrane as a helical segment. At 51-80 (LTLQHGVVVPAEGLPSGSRTLYHYGVKDLA) the chain is on the lumenal side. Residues 81-101 (TVFFYMLVAIIIHATIQEYVL) form a helical membrane-spanning segment. Topologically, residues 102–120 (DKLSRRLQLTKGKQNKLNE) are cytoplasmic. In terms of domain architecture, TLC spans 116-324 (NKLNEAGQLS…TVWLQRWLED (209 aa)). Residues 121 to 141 (AGQLSVFYIVSGIWGMIILAS) form a helical membrane-spanning segment. At 142–159 (ENCLSDPTLLWKSQPHNM) the chain is on the lumenal side. The helical transmembrane segment at 160 to 179 (MTFQMKFFYISQLAYWFHSF) threads the bilayer. Topologically, residues 180 to 191 (PELYFQKVRKQD) are cytoplasmic. Residues 192–214 (IPGQLIYIGLHLFHIGGAYLLYL) traverse the membrane as a helical segment. Topologically, residues 215-218 (NHLG) are lumenal. A helical membrane pass occupies residues 219 to 241 (LLLLMLHYAVELLSSVCSLLYFG). The Cytoplasmic segment spans residues 242–250 (DERYQKGLS). The helical transmembrane segment at 251-271 (LWPIVFISGRLVTLIVSVVTV) threads the bilayer. At 272-295 (GLHLAGTNRNGNALSGNVNVLAAK) the chain is on the lumenal side. A helical transmembrane segment spans residues 296 to 316 (IAVLSSSCSIQVYITWTLTTV). Residues 317–363 (WLQRWLEDANLHVCGRKRRSRARKGTENGVENPNRIDSPPKKKEKAP) lie on the Cytoplasmic side of the membrane. The tract at residues 338-363 (ARKGTENGVENPNRIDSPPKKKEKAP) is disordered. A compositionally biased stretch (basic and acidic residues) spans 354–363 (SPPKKKEKAP).

The protein belongs to the TRAM family.

The protein localises to the endoplasmic reticulum membrane. Stimulatory or required for the translocation of secretory proteins across the ER membrane. The protein is Translocating chain-associated membrane protein 1-like 1 (Tram1l1) of Mus musculus (Mouse).